Reading from the N-terminus, the 115-residue chain is Large ribosomal subunit protein bL20 (115 aa).

The protein belongs to the bacterial ribosomal protein bL20 family.

In terms of biological role, binds directly to 23S ribosomal RNA and is necessary for the in vitro assembly process of the 50S ribosomal subunit. It is not involved in the protein synthesizing functions of that subunit. In Borrelia garinii subsp. bavariensis (strain ATCC BAA-2496 / DSM 23469 / PBi) (Borreliella bavariensis), this protein is Large ribosomal subunit protein bL20.